A 619-amino-acid chain; its full sequence is Kinesin light chain 4 (619 aa).

Ser2 is modified (N-acetylserine). The stretch at 32–150 forms a coiled coil; it reads GLESLHSEHQ…EEEKKHLEFL (119 aa). The stretch at 55 to 88 is one TPR 1 repeat; sequence QQGGHEEGLVHEKARQLRRSMENIELGLSEAQVM. The segment covering 156 to 175 has biased composition (basic and acidic residues); that stretch reads YDEDGHSMEEKEGDASKDSL. The interval 156 to 200 is disordered; it reads YDEDGHSMEEKEGDASKDSLDDLFPNEEEEDSSNDLSRGQGAAAA. Phosphoserine is present on Ser174. A compositionally biased stretch (acidic residues) spans 179 to 188; sequence FPNEEEEDSS. TPR repeat units lie at residues 211–244, 253–286, 295–328, 337–370, and 379–412; these read LRTLHNLVIQYAAQGRYEVAVPLCKQALEDLERT, ATMLNILALVYRDQNKYKEAAHLLNDALSIREST, AATLNNLAVLYGKRGKYKEAEPLCQRALEIREKV, AKQLNNLALLCQNQGKYEAVERYYQRALAIYERQ, and ARTKNNLASCYLKQGKYSEAETLYKEILTRAHVQ. Ser460 carries the phosphoserine modification. A TPR 7 repeat occupies 464–497; sequence NTTLRNLGALYRRQGKLEAAETLEECALRSRKQG. A phosphoserine mark is found at Ser565, Ser566, and Ser590. Positions 571-619 are disordered; the sequence is RKLQGTEPRPSSSNMKRAASLNYLNQPNAAPLQTSRGLSASTVDLSSSS. Positions 592–608 are enriched in polar residues; that stretch reads NYLNQPNAAPLQTSRGL. The segment covering 609 to 619 has biased composition (low complexity); that stretch reads SASTVDLSSSS. Thr612 is modified (phosphothreonine).

The protein belongs to the kinesin light chain family. Oligomeric complex composed of two heavy chains and two light chains.

It localises to the cytoplasm. It is found in the cytoskeleton. In terms of biological role, kinesin is a microtubule-associated force-producing protein that may play a role in organelle transport. The light chain may function in coupling of cargo to the heavy chain or in the modulation of its ATPase activity. The chain is Kinesin light chain 4 (Klc4) from Rattus norvegicus (Rat).